We begin with the raw amino-acid sequence, 339 residues long: Biotin synthase (339 aa).

Positions 55–282 constitute a Radical SAM core domain; it reads NAVQLSTLLS…KAVVRLSAGR (228 aa). 3 residues coordinate [4Fe-4S] cluster: cysteine 70, cysteine 74, and cysteine 77. [2Fe-2S] cluster is bound by residues cysteine 114, cysteine 145, cysteine 205, and arginine 277.

It belongs to the radical SAM superfamily. Biotin synthase family. Homodimer. [4Fe-4S] cluster serves as cofactor. Requires [2Fe-2S] cluster as cofactor.

It catalyses the reaction (4R,5S)-dethiobiotin + (sulfur carrier)-SH + 2 reduced [2Fe-2S]-[ferredoxin] + 2 S-adenosyl-L-methionine = (sulfur carrier)-H + biotin + 2 5'-deoxyadenosine + 2 L-methionine + 2 oxidized [2Fe-2S]-[ferredoxin]. It participates in cofactor biosynthesis; biotin biosynthesis; biotin from 7,8-diaminononanoate: step 2/2. Its function is as follows. Catalyzes the conversion of dethiobiotin (DTB) to biotin by the insertion of a sulfur atom into dethiobiotin via a radical-based mechanism. This is Biotin synthase from Burkholderia cenocepacia (strain ATCC BAA-245 / DSM 16553 / LMG 16656 / NCTC 13227 / J2315 / CF5610) (Burkholderia cepacia (strain J2315)).